The sequence spans 351 residues: Phosphate acyltransferase (351 aa).

The protein belongs to the PlsX family. In terms of assembly, homodimer. Probably interacts with PlsY.

Its subcellular location is the cytoplasm. The enzyme catalyses a fatty acyl-[ACP] + phosphate = an acyl phosphate + holo-[ACP]. It functions in the pathway lipid metabolism; phospholipid metabolism. Catalyzes the reversible formation of acyl-phosphate (acyl-PO(4)) from acyl-[acyl-carrier-protein] (acyl-ACP). This enzyme utilizes acyl-ACP as fatty acyl donor, but not acyl-CoA. This is Phosphate acyltransferase from Maricaulis maris (strain MCS10) (Caulobacter maris).